A 134-amino-acid chain; its full sequence is MKSVFTISASLAISLMLCCTAQANDHKLLGVIAMPRNETNALALKLPVCRIVKRIQLSADHGDLQLSGASVYFKAARSASQSLNIPSEIKEGQTTDWININSDNDNKRCVSKITFSGHTVNSSDMATLKIIGDD.

The signal sequence occupies residues 1-23; the sequence is MKSVFTISASLAISLMLCCTAQA.

The protein belongs to the UPF0412 family.

The protein is UPF0412 protein YaaI of Escherichia coli O157:H7.